A 109-amino-acid polypeptide reads, in one-letter code: Oncomodulin-2 (109 aa).

2 consecutive EF-hand domains span residues 39–74 (MSAS…FESG) and 78–109 (LTES…MVHS). Residues Asp52, Asp54, Ser56, Tyr58, Glu63, Asp91, Asp93, Asp95, Lys97, and Glu102 each contribute to the Ca(2+) site.

The protein belongs to the parvalbumin family.

The protein is Oncomodulin-2 (OCM2) of Homo sapiens (Human).